A 267-amino-acid chain; its full sequence is Methylglyoxal reductase DkgB (267 aa).

Catalysis depends on tyrosine 39, which acts as the Proton donor. A substrate-binding site is contributed by histidine 97. An NADP(+)-binding site is contributed by 179-231 (MTLAYGKALKDEVIARIAAKHNATPAQVILAWAMGEGYSVIPSSTRRENLASS).

This sequence belongs to the aldo/keto reductase family. In terms of assembly, monomer.

The protein resides in the cytoplasm. The enzyme catalyses hydroxyacetone + NADP(+) = methylglyoxal + NADPH + H(+). Functionally, aldo-keto reductase that significantly contributes to cellular methylglyoxal detoxification by catalyzing the NADPH-dependent conversion of methylglyoxal to acetol. In Salmonella typhimurium (strain LT2 / SGSC1412 / ATCC 700720), this protein is Methylglyoxal reductase DkgB.